Consider the following 302-residue polypeptide: Cuticle collagen dpy-13 (302 aa).

Triple-helical region regions lie at residues 106–135 (GPQG…PGKA), 154–210 (GPPG…EGLP), and 219–278 (GEPG…PGTP). The tract at residues 108-284 (QGAPGAPGKP…PGTPGERGIC (177 aa)) is disordered. Pro residues predominate over residues 144-159 (TPPPCKPCPQGPPGAP). Residues 188–197 (PKGPNGAPGK) are compositionally biased toward low complexity. Pro residues-rich tracts occupy residues 247-257 (QPGPKGPPGPD) and 268-277 (QPGPVGPPGT).

It belongs to the cuticular collagen family. As to quaternary structure, collagen polypeptide chains are complexed within the cuticle by disulfide bonds and other types of covalent cross-links.

In terms of biological role, nematode cuticles are composed largely of collagen-like proteins. The cuticle functions both as an exoskeleton and as a barrier to protect the worm from its environment. Mutations in dpy-13 affects the body shape. This is Cuticle collagen dpy-13 (dpy-13) from Caenorhabditis elegans.